The sequence spans 193 residues: Putative F-box protein At1g31072 (193 aa).

The region spanning 4–53 is the F-box domain; that stretch reads EKTLDSIPIDVFLDIFSRLPAKSVGRSCCVSNRWASILGSQDFKELFLTM.

The sequence is that of Putative F-box protein At1g31072 from Arabidopsis thaliana (Mouse-ear cress).